A 149-amino-acid chain; its full sequence is Alpha-crystallin A chain (149 aa).

A sHSP domain is found at 28 to 138 (LLRGFMDSGI…SHSERPIPVS (111 aa)). Residues histidine 55, histidine 76, glutamate 78, histidine 83, histidine 91, and histidine 130 each contribute to the Zn(2+) site. The disordered stretch occupies residues 125-149 (NLVSSHSERPIPVSREEKPTSAPSS). A compositionally biased stretch (basic and acidic residues) spans 130-143 (HSERPIPVSREEKP). Residue serine 138 is glycosylated (O-linked (GlcNAc) serine).

The protein belongs to the small heat shock protein (HSP20) family. Heteropolymer composed of three CRYAA and one CRYAB subunits. Inter-subunit bridging via zinc ions enhances stability, which is crucial as there is no protein turn over in the lens. Can also form homodimers and homotetramers (dimers of dimers) which serve as the building blocks of homooligomers. Within homooligomers, the zinc-binding motif is created from residues of 3 different molecules. His-76 and Glu-78 from one molecule are ligands of the zinc ion, and His-83 and His-130 residues from additional molecules complete the site with tetrahedral coordination geometry.

It is found in the cytoplasm. The protein resides in the nucleus. Functionally, contributes to the transparency and refractive index of the lens. May act as a chaperone, preventing aggregation of various proteins under a wide range of stress conditions. The protein is Alpha-crystallin A chain (CRYAA) of Rana temporaria (European common frog).